The primary structure comprises 399 residues: Acetylornithine aminotransferase (399 aa).

Pyridoxal 5'-phosphate-binding positions include 97–98 and Phe-130; that span reads GA. Arg-133 contributes to the N(2)-acetyl-L-ornithine binding site. 215 to 218 is a pyridoxal 5'-phosphate binding site; it reads DEVQ. Lys-244 is subject to N6-(pyridoxal phosphate)lysine. Residue Thr-272 coordinates N(2)-acetyl-L-ornithine. Thr-273 contacts pyridoxal 5'-phosphate.

This sequence belongs to the class-III pyridoxal-phosphate-dependent aminotransferase family. ArgD subfamily. In terms of assembly, homodimer. The cofactor is pyridoxal 5'-phosphate.

Its subcellular location is the cytoplasm. It carries out the reaction N(2)-acetyl-L-ornithine + 2-oxoglutarate = N-acetyl-L-glutamate 5-semialdehyde + L-glutamate. The protein operates within amino-acid biosynthesis; L-arginine biosynthesis; N(2)-acetyl-L-ornithine from L-glutamate: step 4/4. The sequence is that of Acetylornithine aminotransferase from Mesorhizobium japonicum (strain LMG 29417 / CECT 9101 / MAFF 303099) (Mesorhizobium loti (strain MAFF 303099)).